The primary structure comprises 680 residues: Pilus tip adhesin Cpa (680 aa).

The segment at residues 62-211 (CFNLTKHFPS…IFQSSDKTFQ (150 aa)) is a cross-link (isoglutamyl cysteine thioester (Cys-Gln)). The tract at residues 217-236 (EYVPDTPPKPGEEPPAKTEK) is disordered. A compositionally biased stretch (basic and acidic residues) spans 226-236 (PGEEPPAKTEK). Positions 243 to 546 (KYAEGDYSKL…ELIDVISMED (304 aa)) form a cross-link, isoaspartyl lysine isopeptide (Lys-Asp). Residues 253–311 (LEGATLKLAQIEGSGFQEKIFDSNKSGEKVELPNGTYVLSELKPPQGYGVATPITFKVA) enclose the CNA-B domain. Positions 374–526 (CFNADLHSPP…FFVPNSSRYQ (153 aa)) form a cross-link, isoglutamyl cysteine thioester (Cys-Gln). A cross-link (isoaspartyl lysine isopeptide (Lys-Asn)) is located at residues 562-667 (KTVTGTIADK…KEDETVAFEN (106 aa)). Positions 672–676 (VPPTG) match the VPPTG sorting signal motif. Threonine 675 is covalently cross-linked (Threonyl lysine isopeptide (Thr-Lys) (interchain with K-? in major pilin subunit)). Positions 676 to 680 (GLTTD) are cleaved as a propeptide — removed by sortase.

As to quaternary structure, monomer. Post-translationally, proteolytically processed and assembled in pili through a transpeptidation reaction catalyzed by a sortase, which leads to a covalent link between Cpa and a major pilin subunit.

It is found in the fimbrium. Functionally, component of the pilus tip. Can bind covalently, via its two reactive thioester bonds, to molecular targets from host cell surface and can thus mediate adhesion of the streptococcal pili to host cells. Lysine side chains or a carbohydrate with a free amine group might be candidates for Cpa binding. In vitro, can covalently bind to spermidine, but it is unlikely that spermidine is the natural target of Cpa. The chain is Pilus tip adhesin Cpa (cpa) from Streptococcus pyogenes.